A 422-amino-acid chain; its full sequence is MSLVCFPFKEEDVAVVVRNVECAAAHPRVSTVLCVGYSKGETWCAIEAKRPSIESSTGKRIILLQQKRIGVSLRSGKGDGMNTALAYFLDHTELKRIHFYDSDIVSFSADWITKAERQADLDFDVVRHYFPRSSTDAMITWFVTKIGFCLLWPKTVLPFIEQPLGGELLLTRKAAEALYTDHRVRGQSDWGIDTLYTFIMVQKGLHLAEVYIPEGKVHALYSGLRDLRTMLVECFSAMQSLKDEAVPLNEGTHRMEYTRPVPELVKQKVGYDVEKTLKLLRSNWTQGQRDLLQKHFDPALAKGLLNASEWPTWGFADEEAWVAAYRTLLVHFEKGDEDWEELLFKIWVSRVLNHTMRHSLRGYDAALDALRSLIWETQHQSAMLSKSAAANHHIVSGHSASEALPRTAGQLREKRMDAACAV.

Residues 7–11 (PFKEE), Gln66, Lys77, Asp101, and 101–102 (DS) each bind GDP-alpha-D-mannose. Residues Arg132 and 137-140 (AMIT) contribute to the (R)-glycerate site. The GDP-alpha-D-mannose site is built by Leu164, Asp193, and Tyr221.

It belongs to the glycosyltransferase 78 family.

The catalysed reaction is (R)-glycerate + GDP-alpha-D-mannose = (2R)-2-O-(alpha-D-mannosyl)-glycerate + GDP + H(+). It carries out the reaction GDP-alpha-D-glucose + (R)-glycerate = (2R)-2-O-(alpha-D-glucopyranosyl)-glycerate + GDP + H(+). Activity is not dependent on divalent cations, but it is enhanced by Mg(2+). Its function is as follows. Involved in the biosynthesis of the compatible solute alpha-D-mannosyl-glycerate (MG). Catalyzes the condensation of GDP-alpha-D-mannose (GDP-Man) with D-glycerate to produce alpha-D-mannosyl-glycerate. Can also use GDP-alpha-D-glucose (GDP-Glc) as sugar donor to produce alpha-D-glucopyranosyl-glycerate (GG). This Selaginella moellendorffii (Spikemoss) protein is Mannosylglycerate synthase.